A 356-amino-acid polypeptide reads, in one-letter code: Glutamine synthetase cytosolic isozyme 2 (356 aa).

Residues 19 to 99 (IIAEYIWIGG…VMCDTYTPAG (81 aa)) enclose the GS beta-grasp domain. The 251-residue stretch at 106–356 (KRHNAAKIFS…IAESTILWKP (251 aa)) folds into the GS catalytic domain.

This sequence belongs to the glutamine synthetase family. Homooctamer.

The protein localises to the cytoplasm. It catalyses the reaction L-glutamate + NH4(+) + ATP = L-glutamine + ADP + phosphate + H(+). In Vitis vinifera (Grape), this protein is Glutamine synthetase cytosolic isozyme 2 (GS1-2).